The chain runs to 872 residues: DNA mismatch repair protein MutS (872 aa).

Residue 602 to 609 (GPNMSGKS) participates in ATP binding.

This sequence belongs to the DNA mismatch repair MutS family.

Its function is as follows. This protein is involved in the repair of mismatches in DNA. It is possible that it carries out the mismatch recognition step. This protein has a weak ATPase activity. The polypeptide is DNA mismatch repair protein MutS (Staphylococcus aureus (strain Mu3 / ATCC 700698)).